A 144-amino-acid polypeptide reads, in one-letter code: Austinoid biosynthesis cluster protein S (144 aa).

This sequence belongs to the trt14 isomerase family. As to quaternary structure, homodimer.

It participates in secondary metabolite biosynthesis; terpenoid biosynthesis. In terms of biological role, part of the gene cluster that mediates the biosynthesis of calidodehydroaustin, a fungal meroterpenoid. The first step of the pathway is the synthesis of 3,5-dimethylorsellinic acid by the polyketide synthase ausA. 3,5-dimethylorsellinic acid is then prenylated by the polyprenyl transferase ausN. Further epoxidation by the FAD-dependent monooxygenase ausM and cyclization by the probable terpene cyclase ausL lead to the formation of protoaustinoid A. Protoaustinoid A is then oxidized to spiro-lactone preaustinoid A3 by the combined action of the FAD-binding monooxygenases ausB and ausC, and the dioxygenase ausE. Acid-catalyzed keto-rearrangement and ring contraction of the tetraketide portion of preaustinoid A3 by ausJ lead to the formation of preaustinoid A4. The aldo-keto reductase ausK, with the help of ausH, is involved in the next step by transforming preaustinoid A4 into isoaustinone which is in turn hydroxylated by the P450 monooxygenase ausI to form austinolide. The cytochrome P450 monooxygenase ausG modifies austinolide to austinol. Austinol is further acetylated to austin by the O-acetyltransferase ausP, which spontaneously changes to dehydroaustin. The cytochrome P450 monooxygenase ausR then converts dehydroaustin is into 7-dehydrodehydroaustin. The hydroxylation catalyzed by ausR permits the O-acetyltransferase ausQ to add an additional acetyl group to the molecule, leading to the formation of acetoxydehydroaustin. The short chain dehydrogenase ausT catalyzes the reduction of the double bond present between carbon atoms 1 and 2 to convert 7-dehydrodehydroaustin into 1,2-dihydro-7-hydroxydehydroaustin. AusQ catalyzes not only an acetylation reaction but also the addition of the PKS ausV diketide product to 1,2-dihydro-7-hydroxydehydroaustin, forming precalidodehydroaustin. Finally, the iron/alpha-ketoglutarate-dependent dioxygenase converts precalidodehydroaustin into calidodehydroaustin. AusS is necessary for austinoids production and may play a possible function as a regulator. Its function is as follows. May play a possible function as a regulator. The polypeptide is Austinoid biosynthesis cluster protein S (Aspergillus calidoustus).